Reading from the N-terminus, the 184-residue chain is Elongation factor P (184 aa).

Belongs to the elongation factor P family.

The protein resides in the cytoplasm. It functions in the pathway protein biosynthesis; polypeptide chain elongation. Functionally, involved in peptide bond synthesis. Stimulates efficient translation and peptide-bond synthesis on native or reconstituted 70S ribosomes in vitro. Probably functions indirectly by altering the affinity of the ribosome for aminoacyl-tRNA, thus increasing their reactivity as acceptors for peptidyl transferase. The polypeptide is Elongation factor P (Leptothrix cholodnii (strain ATCC 51168 / LMG 8142 / SP-6) (Leptothrix discophora (strain SP-6))).